Here is a 341-residue protein sequence, read N- to C-terminus: NADH-quinone oxidoreductase subunit H 2 (341 aa).

8 consecutive transmembrane segments (helical) span residues 13-33, 82-102, 115-135, 161-181, 190-210, 248-268, 277-297, and 317-337; these read IIVIGQSVLLLVLLLISIAYI, GVFLLAPLVTCVLALAAWAVI, VGVLYILAVSSLSVYGIIMAG, IGFVVICVLLCVGSLNLTAIV, MLGWYWLPLFPMFVVFYVSAL, YVAIVTMCAMGTILFLGGWLP, WVPGIVWFALKVLFMFFLFAM, and VFLPLSLAMVVIVAAVLQFAG.

It belongs to the complex I subunit 1 family. NDH-1 is composed of 14 different subunits. Subunits NuoA, H, J, K, L, M, N constitute the membrane sector of the complex.

It is found in the cell inner membrane. It catalyses the reaction a quinone + NADH + 5 H(+)(in) = a quinol + NAD(+) + 4 H(+)(out). Functionally, NDH-1 shuttles electrons from NADH, via FMN and iron-sulfur (Fe-S) centers, to quinones in the respiratory chain. The immediate electron acceptor for the enzyme in this species is believed to be ubiquinone. Couples the redox reaction to proton translocation (for every two electrons transferred, four hydrogen ions are translocated across the cytoplasmic membrane), and thus conserves the redox energy in a proton gradient. This subunit may bind ubiquinone. The chain is NADH-quinone oxidoreductase subunit H 2 from Rhodopseudomonas palustris (strain BisB5).